Consider the following 1162-residue polypeptide: Spike glycoprotein (1162 aa).

Residues M1–A18 form the signal peptide. At A19–Y1095 the chain is on the extracellular side. 22 N-linked (GlcNAc...) asparagine; by host glycosylation sites follow: N51, N77, N103, N144, N163, N178, N212, N237, N247, N264, N271, N276, N306, N425, N447, N513, N530, N579, N591, N669, N676, and N714. Residues I769–L874 form a heptad repeat 1 (HR1) region. Residues Q822–V866 adopt a coiled-coil conformation. N947, N960, N979, N1014, N1051, N1058, and N1074 each carry an N-linked (GlcNAc...) asparagine; by host glycan. The interval N1024–I1105 is heptad repeat 2 (HR2). A coiled-coil region spans residues P1055–L1083. Residues V1096–F1116 traverse the membrane as a helical segment. The Cytoplasmic portion of the chain corresponds to M1117–V1162. The short motif at K1159–V1162 is the Di-lysine motif element.

Belongs to the gammacoronaviruses spike protein family. As to quaternary structure, homotrimer; each monomer consists of a S1 and a S2 subunit. The resulting peplomers protrude from the virus surface as spikes. In terms of processing, specific enzymatic cleavages in vivo yield mature proteins. The precursor is processed into S1 and S2 by host cell furin or furin-like protease to yield the mature S1 and S2 proteins. The cleavage site between S1 and S2 requires the optimal sequence [KR]-X-[KR]-R. Additionally, a second cleavage leads to the release of a fusion peptide after viral attachment to host cell receptor.

The protein localises to the virion membrane. It localises to the host endoplasmic reticulum-Golgi intermediate compartment membrane. In terms of biological role, attaches the virion to the host cell membrane by interacting with sialic acids, initiating the infection. Functionally, mediates fusion of the virion and cellular membranes by acting as a class I viral fusion protein. Under the current model, the protein has at least 3 conformational states: pre-fusion native state, pre-hairpin intermediate state, and post-fusion hairpin state. During viral and target cell membrane fusion, the coiled coil regions (heptad repeats) assume a trimer-of-hairpins structure, positioning the fusion peptide in close proximity to the C-terminal region of the ectodomain. The formation of this structure appears to drive apposition and subsequent fusion of viral and target cell membranes. Its function is as follows. Acts as a viral fusion peptide after S2 cleavage occurring upon virus endocytosis. The protein is Spike glycoprotein of Avian infectious bronchitis virus (strain KB8523) (IBV).